Here is a 61-residue protein sequence, read N- to C-terminus: Large ribosomal subunit protein uL30 (61 aa).

It belongs to the universal ribosomal protein uL30 family. As to quaternary structure, part of the 50S ribosomal subunit.

This is Large ribosomal subunit protein uL30 from Jannaschia sp. (strain CCS1).